Consider the following 370-residue polypeptide: Ubiquitin carboxyl-terminal hydrolase 12 (370 aa).

The short motif at 1–4 (MEIL) is the Required for plasma membrane localization of USP12/WDR20 element. One can recognise a USP domain in the interval 39–369 (FGLVNFGNTC…SGYILFYQSR (331 aa)). The active-site Nucleophile is cysteine 48. A disordered region spans residues 145-169 (KQEKQNGRLPNGNIDNENNNSTPDP). The segment covering 157–168 (NIDNENNNSTPD) has biased composition (polar residues). Positions 186, 189, 233, and 236 each coordinate Zn(2+). The active-site Proton acceptor is histidine 317.

Belongs to the peptidase C19 family. USP12/USP46 subfamily. In terms of assembly, interacts with WDR48. Interacts with WDR20; this interaction promotes translocation of the USP12 complex to the plasma membrane. Component of the USP12-WDR20-WDR48 deubiquitinating complex. Component of the USP12-DMWD-WDR48 deubiquitinating complex. Interacts with PHLPP1. Interacts with RBPJ. Interacts with CBP; this interaction blocks the acetyltransferase activity of CREBBP. Interacts with ITCH; the interaction is more efficient when both USP12 and WDR48/UAF1 are involved and may mediate recruitment of the USP12 deubiquitinating complex to Notch. Interacts with OPTN and SQSTM1/p62; the interaction is independent of deubiquitinase activity and may be involved in regulation of autophagic flux. (Microbial infection) Interacts with Epstein-Barr virus protein EBNA3.

The protein resides in the nucleus. It is found in the cytoplasm. Its subcellular location is the cell membrane. The catalysed reaction is Thiol-dependent hydrolysis of ester, thioester, amide, peptide and isopeptide bonds formed by the C-terminal Gly of ubiquitin (a 76-residue protein attached to proteins as an intracellular targeting signal).. Its activity is regulated as follows. Activated by interaction with WDR20, WDR48 and DMWD through different allosteric mechanisms. In terms of biological role, deubiquitinating enzyme that plays various roles in the regulation of the immune response and inflammation. During TCR engagement and activation, translocates into the cytoplasm and deubiquitinates its substrates LAT and TRAT1 and prevents their lysosome-dependent degradation to stabilize the TCR signaling complex at the plasma membrane. Plays an essential role in the selective LPS-induced macrophage response through the activation of NF-kappa-B pathway. In addition, promotes that antiviral immune response through targeting DNA sensor IFI16 to inhibit its proteasome-dependent degradation. Participates in the interferon signaling pathway and antiviral response independently of its deubiquitinase activity by maintaining nuclear phosphorylated STAT1 levels via inhibition of its CREBBP-mediated acetylation and subsequent dephosphorylation. Plays an intrinsic role in promoting the differentiation, activation and proliferation of CD4(+) T-cell by activating the NF-kappa-B signaling pathway through deubiquitinating and stabilizing B-cell lymphoma/leukemia 10/BCL10. In myeloid-derived suppressor cells promotes the activation of the NF-kappa-B via deubiquitination and stabilization of RELA. Regulates the 'Lys-63'-linked polyubiquitin chains of BAX and thereby modulates the mitochondrial apoptotic process. Negative regulator of NOTCH signaling that specifically deubiquitinates non-activated NOTCH receptors to target them for lysosomal degradation; deubiquitination of NOTCH stimulates its transport form late endosomes to lysosomes. Protects neurons against HTT/huntingtin-induced polyglutamine expansion-dependent neurodegeneration through regulation of autophagic flux. This function is independent of deubiquitinase activity or of other components of the USP12-WDR20-WDR48 deubiquitinating complex. In complex with WDR48, acts as a potential tumor suppressor by positively regulating PHLPP1 stability. Its function is as follows. (Microbial infection) Forms a complex with Epstein-Barr virus protein EBNA3 which is an active deubiquitinase activity that may select specific substrates to promote B-lymphocyte transformation. This chain is Ubiquitin carboxyl-terminal hydrolase 12 (USP12), found in Homo sapiens (Human).